The following is a 313-amino-acid chain: MSKMMVFTGNANPDLARRVVRQLHIPLGDVSVGKFSDGEISTEINENVRGKDVFIIQPTCAPTNDNLMELVVMADAFRRSSASRITAVIPYFGYARQDRRPRSARVAISAKVVADMLTVVGIDRVLTVDLHADQIQGFFDIPVDNIYGSPVLVDDIEDQRFENLMIVSPDIGGVVRARAVAKSLGVDLGIIDKRREKANHSEVMHIIGDVEGRTCILVDDMVDTAGTLCHAAKALKEHGAAKVFAYCTHPVLSGRAIENIENSVLDELVVTNTIPLSAAAQACSRIRQLDIAPVVAEAVRRISNEESISAMFR.

Residues 37-39 (DGE) and 96-97 (RQ) each bind ATP. Residues His131 and Asp170 each contribute to the Mg(2+) site. The active site involves Lys193. D-ribose 5-phosphate-binding positions include Arg195, Asp219, and 223–227 (DTAGT).

This sequence belongs to the ribose-phosphate pyrophosphokinase family. Class I subfamily. In terms of assembly, homohexamer. Requires Mg(2+) as cofactor.

The protein resides in the cytoplasm. It carries out the reaction D-ribose 5-phosphate + ATP = 5-phospho-alpha-D-ribose 1-diphosphate + AMP + H(+). It participates in metabolic intermediate biosynthesis; 5-phospho-alpha-D-ribose 1-diphosphate biosynthesis; 5-phospho-alpha-D-ribose 1-diphosphate from D-ribose 5-phosphate (route I): step 1/1. Involved in the biosynthesis of the central metabolite phospho-alpha-D-ribosyl-1-pyrophosphate (PRPP) via the transfer of pyrophosphoryl group from ATP to 1-hydroxyl of ribose-5-phosphate (Rib-5-P). The chain is Ribose-phosphate pyrophosphokinase from Pseudomonas syringae pv. tomato (strain ATCC BAA-871 / DC3000).